Here is a 118-residue protein sequence, read N- to C-terminus: Small ribosomal subunit protein uS13 (118 aa).

Positions 92–118 (RRSLPVRGQRTKTNARTRKGPRKPIKK) are disordered.

The protein belongs to the universal ribosomal protein uS13 family. As to quaternary structure, part of the 30S ribosomal subunit. Forms a loose heterodimer with protein S19. Forms two bridges to the 50S subunit in the 70S ribosome.

Its function is as follows. Located at the top of the head of the 30S subunit, it contacts several helices of the 16S rRNA. In the 70S ribosome it contacts the 23S rRNA (bridge B1a) and protein L5 of the 50S subunit (bridge B1b), connecting the 2 subunits; these bridges are implicated in subunit movement. Contacts the tRNAs in the A and P-sites. The polypeptide is Small ribosomal subunit protein uS13 (Acinetobacter baylyi (strain ATCC 33305 / BD413 / ADP1)).